A 316-amino-acid polypeptide reads, in one-letter code: 4-hydroxy-3-methylbut-2-enyl diphosphate reductase (316 aa).

Position 12 (C12) interacts with [4Fe-4S] cluster. H41 and H74 together coordinate (2E)-4-hydroxy-3-methylbut-2-enyl diphosphate. Dimethylallyl diphosphate is bound by residues H41 and H74. The isopentenyl diphosphate site is built by H41 and H74. [4Fe-4S] cluster is bound at residue C96. H124 contributes to the (2E)-4-hydroxy-3-methylbut-2-enyl diphosphate binding site. H124 contributes to the dimethylallyl diphosphate binding site. H124 contributes to the isopentenyl diphosphate binding site. Catalysis depends on E126, which acts as the Proton donor. T167 lines the (2E)-4-hydroxy-3-methylbut-2-enyl diphosphate pocket. C197 contacts [4Fe-4S] cluster. The (2E)-4-hydroxy-3-methylbut-2-enyl diphosphate site is built by S225, S226, N227, and S269. Dimethylallyl diphosphate contacts are provided by S225, S226, N227, and S269. S225, S226, N227, and S269 together coordinate isopentenyl diphosphate.

The protein belongs to the IspH family. As to quaternary structure, homodimer. [4Fe-4S] cluster is required as a cofactor.

The catalysed reaction is isopentenyl diphosphate + 2 oxidized [2Fe-2S]-[ferredoxin] + H2O = (2E)-4-hydroxy-3-methylbut-2-enyl diphosphate + 2 reduced [2Fe-2S]-[ferredoxin] + 2 H(+). It catalyses the reaction dimethylallyl diphosphate + 2 oxidized [2Fe-2S]-[ferredoxin] + H2O = (2E)-4-hydroxy-3-methylbut-2-enyl diphosphate + 2 reduced [2Fe-2S]-[ferredoxin] + 2 H(+). The protein operates within isoprenoid biosynthesis; dimethylallyl diphosphate biosynthesis; dimethylallyl diphosphate from (2E)-4-hydroxy-3-methylbutenyl diphosphate: step 1/1. Its pathway is isoprenoid biosynthesis; isopentenyl diphosphate biosynthesis via DXP pathway; isopentenyl diphosphate from 1-deoxy-D-xylulose 5-phosphate: step 6/6. Its function is as follows. Catalyzes the conversion of 1-hydroxy-2-methyl-2-(E)-butenyl 4-diphosphate (HMBPP) into a mixture of isopentenyl diphosphate (IPP) and dimethylallyl diphosphate (DMAPP). Acts in the terminal step of the DOXP/MEP pathway for isoprenoid precursor biosynthesis. The protein is 4-hydroxy-3-methylbut-2-enyl diphosphate reductase of Salmonella schwarzengrund (strain CVM19633).